We begin with the raw amino-acid sequence, 292 residues long: BTB/POZ domain-containing protein KCTD7 (292 aa).

The segment at 1 to 27 (MVVFSAASDSEKPGDAMSGADKGEEEY) is disordered. The BTB domain maps to 56 to 144 (IPLNVGGTYF…YAIGPLLENL (89 aa)).

The protein localises to the cell membrane. Its subcellular location is the cytoplasm. It localises to the cytosol. The protein is BTB/POZ domain-containing protein KCTD7 (kctd7) of Danio rerio (Zebrafish).